The chain runs to 181 residues: MDKNTTSELAASIRSIPDYPKPGIIFRDITTLLGNPRAFRRAVDELVQPYAGTKIDKIAGMEARGFILGGAVAHQLSSGFVPIRKKGKLPHETVRIAYSLEYGVDEMEMHRDAVQPGEKVILVDDLIATGGTAVGATKLLRQIGAEVVGACFVIDLPDLGGRKKLEELGVVVHTLVEFSGH.

This sequence belongs to the purine/pyrimidine phosphoribosyltransferase family. In terms of assembly, homodimer.

It is found in the cytoplasm. The catalysed reaction is AMP + diphosphate = 5-phospho-alpha-D-ribose 1-diphosphate + adenine. It participates in purine metabolism; AMP biosynthesis via salvage pathway; AMP from adenine: step 1/1. Functionally, catalyzes a salvage reaction resulting in the formation of AMP, that is energically less costly than de novo synthesis. This chain is Adenine phosphoribosyltransferase, found in Rhizobium leguminosarum bv. trifolii (strain WSM2304).